The sequence spans 366 residues: tRNA/tmRNA (uracil-C(5))-methyltransferase (366 aa).

Residues Gln190, Tyr218, Asn223, Glu239, and Asp299 each contribute to the S-adenosyl-L-methionine site. The Nucleophile role is filled by Cys324. Glu358 (proton acceptor) is an active-site residue.

It belongs to the class I-like SAM-binding methyltransferase superfamily. RNA M5U methyltransferase family. TrmA subfamily.

It carries out the reaction uridine(54) in tRNA + S-adenosyl-L-methionine = 5-methyluridine(54) in tRNA + S-adenosyl-L-homocysteine + H(+). It catalyses the reaction uridine(341) in tmRNA + S-adenosyl-L-methionine = 5-methyluridine(341) in tmRNA + S-adenosyl-L-homocysteine + H(+). Functionally, dual-specificity methyltransferase that catalyzes the formation of 5-methyluridine at position 54 (m5U54) in all tRNAs, and that of position 341 (m5U341) in tmRNA (transfer-mRNA). This is tRNA/tmRNA (uracil-C(5))-methyltransferase from Shigella flexneri serotype 5b (strain 8401).